Reading from the N-terminus, the 275-residue chain is 4-deoxy-L-threo-5-hexosulose-uronate ketol-isomerase (275 aa).

Zn(2+)-binding residues include H193, H195, E200, and H242.

It belongs to the KduI family. Zn(2+) is required as a cofactor.

The enzyme catalyses 5-dehydro-4-deoxy-D-glucuronate = 3-deoxy-D-glycero-2,5-hexodiulosonate. It participates in glycan metabolism; pectin degradation; 2-dehydro-3-deoxy-D-gluconate from pectin: step 4/5. Functionally, catalyzes the isomerization of 5-dehydro-4-deoxy-D-glucuronate to 3-deoxy-D-glycero-2,5-hexodiulosonate. The sequence is that of 4-deoxy-L-threo-5-hexosulose-uronate ketol-isomerase from Bacillus pumilus (strain SAFR-032).